Reading from the N-terminus, the 997-residue chain is Synaptonemal complex protein 1 (997 aa).

A Mediates head to head self-assembly of N-terminal ends motif is present at residues Pro102–Lys112. The short motif at Lys118–Lys121 is the Nuclear localization signal element. Coiled coils occupy residues Lys121–Glu176 and Tyr212–Ser696. Residues Glu207–Gln363 form an interaction with SYCE3 region. Residues Glu698 to Glu792 form a required for pH-induced assembly of C-terminal ends into antiparallel tetramers region. A Nuclear localization signal motif is present at residues Leu701–Val704. Positions Lys768–Thr806 form a coiled coil. The DNA-binding stretch occupies residues Asn805 to Thr997. The residue at position 824 (Ser824) is a Phosphoserine. A disordered region spans residues Thr828–Ala863. Over residues Lys835–Ser851 the composition is skewed to polar residues. Residues Gly852 to Leu861 are compositionally biased toward basic and acidic residues. The Nuclear localization signal signature appears at Lys902–Lys905. A Phosphothreonine modification is found at Thr940.

As to quaternary structure, structural component of synaptonemal complexes. Homotetramer that consists of an N-terminal four-helical bundle that bifurcates into two elongated C-terminal dimeric coiled coils. This tetrameric building block potentially self-assembles into a supramolecular zipper-like lattice to mediate meiotic chromosome synapsis. Self-assembly is likely initiated by local proton density at chromosome axis, which is predicted to trigger antiparallel back to back assembly of adjacent C-terminal ends into tetrameric structures that anchor to chromosomal DNA. Then the N-terminal ends are predicted to undergo cooperative antiparallel head to head assembly at the midline of synaptonemal complexes central element to form a zipper-like lattice between properly aligned homologous chromosomes. The nascent synapsis generated by SYCP1 is stabilized through interaction with central element proteins SYCE1 and SYCE2. Interacts (via tetrameric core) with SYCE3; the interaction remodels SYCP1 homotetramers to 2:1 heterotrimers with SYCE3. SYCP1/SYCE3 heterotrimers form lattice assemblies as part of the mature synaptonemal complex via both lateral and head-to-head interactions. Forms a complex with EWSR1, PRDM9, SYCP3 and REC8; complex formation is dependent of phosphorylated form of REC8 and requires PRDM9 bound to hotspot DNA; EWSR1 joins PRDM9 with the chromosomal axis through REC8. Interacts with SPO16. As to expression, testis.

It localises to the nucleus. It is found in the chromosome. Its subcellular location is the centromere. Functionally, major component of the transverse filaments of synaptonemal complexes, formed between homologous chromosomes during meiotic prophase. Required for normal assembly of the central element of the synaptonemal complexes. Required for normal centromere pairing during meiosis. Required for normal meiotic chromosome synapsis during oocyte and spermatocyte development and for normal male and female fertility. In Rattus norvegicus (Rat), this protein is Synaptonemal complex protein 1.